Consider the following 509-residue polypeptide: Cation transporter HKT2;4 (509 aa).

The Cytoplasmic segment spans residues 1–32 (MPIRLHIFVSSARHAINSSALICRFIAFHLSP). The next 2 membrane-spanning stretches (helical) occupy residues 33 to 53 (LLIH…ALVV) and 96 to 116 (VLTL…GLVL). Topologically, residues 117-164 (ESSKQNKHDPENRRVSSVTVCEQSHLEEAIPQTPSMNSTDIKRSCHKY) are cytoplasmic. Helical transmembrane passes span 165 to 185 (LVFV…LLVF) and 237 to 257 (GLLL…PMFL). Residues 258–296 (RLVIWALRGLRLAKAEEPDFMMNNSSSVGFSHLLPNLQT) are Cytoplasmic-facing. The next 2 membrane-spanning stretches (helical) occupy residues 297-317 (IFLA…FCCL) and 353-373 (CSLV…TPSL). Over 374-400 (TKLFSACQDHKQIGPESDDRTSKGKPF) the chain is Cytoplasmic. 2 consecutive transmembrane segments (helical) span residues 401-421 (LKTM…LVCI) and 476-496 (SFSG…MLYG). Topologically, residues 497 to 509 (RLNSKDSTSARTR) are cytoplasmic.

This sequence belongs to the TrkH potassium transport family. HKT (TC 2.A.38.3) subfamily. As to expression, expressed in spikelets, leaf blades, leaf sheaths, internodes, nodes, the base of stems and roots.

It is found in the cell membrane. It catalyses the reaction K(+)(in) = K(+)(out). The enzyme catalyses Mg(2+)(in) = Mg(2+)(out). The catalysed reaction is Ca(2+)(in) = Ca(2+)(out). In terms of biological role, high-affinity potassium transporter that does not show potassium-sodium cotransport. Potassium transport seems to be independent of sodium. Mediates transport of the divalent cations magnesium and calcium in the absence of competing potassium ions. Selectivity for potassium is dominant over divalent cations, and magnesium and calcium transport may be small and may depend on competing potassium concentrations. The polypeptide is Cation transporter HKT2;4 (Oryza sativa subsp. japonica (Rice)).